A 93-amino-acid chain; its full sequence is uncharacterized protein (93 aa).

This is an uncharacterized protein from Methanocaldococcus jannaschii (strain ATCC 43067 / DSM 2661 / JAL-1 / JCM 10045 / NBRC 100440) (Methanococcus jannaschii).